A 122-amino-acid chain; its full sequence is Small ribosomal subunit protein bS6 (122 aa).

A disordered region spans residues 99–122 (PSPMMKEVAREEAKKAAAQTEQAA).

It belongs to the bacterial ribosomal protein bS6 family.

Binds together with bS18 to 16S ribosomal RNA. In Ralstonia pickettii (strain 12J), this protein is Small ribosomal subunit protein bS6.